A 983-amino-acid chain; its full sequence is Bifunctional glutamine synthetase adenylyltransferase/adenylyl-removing enzyme (983 aa).

The segment at 1–468 (MTVENAKALF…KQYAALFEQA (468 aa)) is adenylyl removase. The interval 473–983 (AASGNLVFTG…FDKLVGHGAD (511 aa)) is adenylyl transferase.

It belongs to the GlnE family. Mg(2+) serves as cofactor.

It catalyses the reaction [glutamine synthetase]-O(4)-(5'-adenylyl)-L-tyrosine + phosphate = [glutamine synthetase]-L-tyrosine + ADP. It carries out the reaction [glutamine synthetase]-L-tyrosine + ATP = [glutamine synthetase]-O(4)-(5'-adenylyl)-L-tyrosine + diphosphate. Its function is as follows. Involved in the regulation of glutamine synthetase GlnA, a key enzyme in the process to assimilate ammonia. When cellular nitrogen levels are high, the C-terminal adenylyl transferase (AT) inactivates GlnA by covalent transfer of an adenylyl group from ATP to specific tyrosine residue of GlnA, thus reducing its activity. Conversely, when nitrogen levels are low, the N-terminal adenylyl removase (AR) activates GlnA by removing the adenylyl group by phosphorolysis, increasing its activity. The regulatory region of GlnE binds the signal transduction protein PII (GlnB) which indicates the nitrogen status of the cell. The sequence is that of Bifunctional glutamine synthetase adenylyltransferase/adenylyl-removing enzyme from Brucella melitensis biotype 1 (strain ATCC 23456 / CCUG 17765 / NCTC 10094 / 16M).